The sequence spans 149 residues: Large ribosomal subunit protein bL9 (149 aa).

Belongs to the bacterial ribosomal protein bL9 family.

Functionally, binds to the 23S rRNA. In Fusobacterium nucleatum subsp. nucleatum (strain ATCC 25586 / DSM 15643 / BCRC 10681 / CIP 101130 / JCM 8532 / KCTC 2640 / LMG 13131 / VPI 4355), this protein is Large ribosomal subunit protein bL9.